The sequence spans 356 residues: Peptide chain release factor 1 (356 aa).

An N5-methylglutamine modification is found at Q233.

The protein belongs to the prokaryotic/mitochondrial release factor family. Post-translationally, methylated by PrmC. Methylation increases the termination efficiency of RF1.

It is found in the cytoplasm. Peptide chain release factor 1 directs the termination of translation in response to the peptide chain termination codons UAG and UAA. This is Peptide chain release factor 1 from Oceanobacillus iheyensis (strain DSM 14371 / CIP 107618 / JCM 11309 / KCTC 3954 / HTE831).